A 182-amino-acid chain; its full sequence is UPF0397 protein BCAH187_A2708 (182 aa).

Transmembrane regions (helical) follow at residues 9–29 (VVAI…GFSI), 40–60 (AILT…IGLI), 71–91 (WGIW…MGFI), 114–134 (ITGL…DIIV), and 142–162 (IVIQ…VLGL).

This sequence belongs to the UPF0397 family.

Its subcellular location is the cell membrane. This Bacillus cereus (strain AH187) protein is UPF0397 protein BCAH187_A2708.